Reading from the N-terminus, the 379-residue chain is Succinyl-diaminopimelate desuccinylase (379 aa).

H70 lines the Zn(2+) pocket. D72 is a catalytic residue. Residue D103 coordinates Zn(2+). The active-site Proton acceptor is the E137. Residues E138, E166, and H352 each coordinate Zn(2+).

The protein belongs to the peptidase M20A family. DapE subfamily. Homodimer. Requires Zn(2+) as cofactor. Co(2+) serves as cofactor.

It catalyses the reaction N-succinyl-(2S,6S)-2,6-diaminopimelate + H2O = (2S,6S)-2,6-diaminopimelate + succinate. It participates in amino-acid biosynthesis; L-lysine biosynthesis via DAP pathway; LL-2,6-diaminopimelate from (S)-tetrahydrodipicolinate (succinylase route): step 3/3. Functionally, catalyzes the hydrolysis of N-succinyl-L,L-diaminopimelic acid (SDAP), forming succinate and LL-2,6-diaminopimelate (DAP), an intermediate involved in the bacterial biosynthesis of lysine and meso-diaminopimelic acid, an essential component of bacterial cell walls. The protein is Succinyl-diaminopimelate desuccinylase of Burkholderia cenocepacia (strain HI2424).